Reading from the N-terminus, the 261-residue chain is Anamorsin homolog (261 aa).

Positions 4 to 134 (VQENNQVLYI…EIGSAAKLSL (131 aa)) are N-terminal SAM-like domain. The interval 134–173 (LGGGANKAKVAAVWKLDVDDDGEAEERIDEDELLDEEDKV) is linker. Residues Cys183, Cys192, Cys195, and Cys197 each coordinate [2Fe-2S] cluster. Positions 183-197 (CGTTGKRKACKDCSC) are fe-S binding site A. Cys222, Cys225, Cys233, and Cys236 together coordinate [4Fe-4S] cluster. Short sequence motifs (cx2C motif) lie at residues 222–225 (CGSC) and 233–236 (CATC). Residues 222 to 236 (CGSCYLGDAFRCATC) form a fe-S binding site B region.

The protein belongs to the anamorsin family. Monomer. Requires [2Fe-2S] cluster as cofactor. [4Fe-4S] cluster is required as a cofactor.

It localises to the cytoplasm. The protein resides in the mitochondrion intermembrane space. Functionally, component of the cytosolic iron-sulfur (Fe-S) protein assembly (CIA) machinery. Required for the maturation of extramitochondrial Fe-S proteins. Part of an electron transfer chain functioning in an early step of cytosolic Fe-S biogenesis, facilitating the de novo assembly of a [4Fe-4S] cluster on the cytosolic Fe-S scaffold complex. Electrons are transferred from NADPH via a FAD- and FMN-containing diflavin oxidoreductase. Together with the diflavin oxidoreductase, also required for the assembly of the diferric tyrosyl radical cofactor of ribonucleotide reductase (RNR), probably by providing electrons for reduction during radical cofactor maturation in the catalytic small subunit. This is Anamorsin homolog from Culex quinquefasciatus (Southern house mosquito).